A 387-amino-acid polypeptide reads, in one-letter code: Probable purine permease 6 (387 aa).

The disordered stretch occupies residues 1-24 (MMELESETQELHLHVNGEPEGKFS). Residues 9 to 24 (QELHLHVNGEPEGKFS) show a composition bias toward basic and acidic residues. Transmembrane regions (helical) follow at residues 36-56 (LRVS…TLLG), 68-88 (WLET…YYYL), 106-126 (FLTL…HCIL), 129-149 (FGLL…QLAF), 162-182 (ITPF…LLVI), 201-221 (YVIG…VLSL), 238-258 (ILDM…VGLF), 283-303 (INIG…GLII), 309-329 (FSNV…VVFF), and 333-353 (MSGI…SYGY). Residues 362–387 (PEEDQELPQSKEEEEQKQVDTIHVQA) form a disordered region. A compositionally biased stretch (basic and acidic residues) spans 370–381 (QSKEEEEQKQVD).

Belongs to the purine permeases (TC 2.A.7.14) family.

Its subcellular location is the membrane. The chain is Probable purine permease 6 (PUP6) from Arabidopsis thaliana (Mouse-ear cress).